Reading from the N-terminus, the 891-residue chain is Alanine--tRNA ligase (891 aa).

The Zn(2+) site is built by His564, His568, Cys677, and His681.

Belongs to the class-II aminoacyl-tRNA synthetase family. Zn(2+) serves as cofactor.

The protein resides in the cytoplasm. The enzyme catalyses tRNA(Ala) + L-alanine + ATP = L-alanyl-tRNA(Ala) + AMP + diphosphate. Its function is as follows. Catalyzes the attachment of alanine to tRNA(Ala) in a two-step reaction: alanine is first activated by ATP to form Ala-AMP and then transferred to the acceptor end of tRNA(Ala). Also edits incorrectly charged Ser-tRNA(Ala) and Gly-tRNA(Ala) via its editing domain. This Rhodopseudomonas palustris (strain BisA53) protein is Alanine--tRNA ligase.